The sequence spans 169 residues: Der GTPase-activating protein YihI (169 aa).

Disordered regions lie at residues 1–98 (MKPS…PQAE) and 144–169 (GLSY…LRGN). Over residues 10–19 (SKGHAKARRK) the composition is skewed to basic residues. The segment covering 20–30 (TREELDQEARD) has biased composition (basic and acidic residues). The segment covering 31–40 (RKRQKKRRGH) has biased composition (basic residues). Residues 49-58 (GNTTSGSKGQ) are compositionally biased toward polar residues. The segment covering 147 to 159 (YDDDEEEEEDEKQ) has biased composition (acidic residues). Residues 160–169 (EDMMRLLRGN) are compositionally biased toward basic and acidic residues.

This sequence belongs to the YihI family. In terms of assembly, interacts with Der.

A GTPase-activating protein (GAP) that modifies Der/EngA GTPase function. May play a role in ribosome biogenesis. This is Der GTPase-activating protein YihI from Escherichia coli O139:H28 (strain E24377A / ETEC).